Here is a 414-residue protein sequence, read N- to C-terminus: Serine/threonine transporter SstT (414 aa).

8 helical membrane-spanning segments follow: residues 22-42, 54-74, 89-109, 148-168, 189-209, 223-243, 305-325, and 337-357; these read GLVL…TIGF, IFVK…VMAA, IIVL…IAGF, AIFK…GLAL, IVHV…AETL, LLAV…PILV, MAGA…TLGL, and IVAA…LLLI.

Belongs to the dicarboxylate/amino acid:cation symporter (DAACS) (TC 2.A.23) family.

It localises to the cell inner membrane. The enzyme catalyses L-serine(in) + Na(+)(in) = L-serine(out) + Na(+)(out). It carries out the reaction L-threonine(in) + Na(+)(in) = L-threonine(out) + Na(+)(out). Involved in the import of serine and threonine into the cell, with the concomitant import of sodium (symport system). The polypeptide is Serine/threonine transporter SstT (Haemophilus influenzae (strain PittEE)).